Reading from the N-terminus, the 496-residue chain is Lysine--tRNA ligase (496 aa).

The Mg(2+) site is built by Glu408 and Glu415.

The protein belongs to the class-II aminoacyl-tRNA synthetase family. Homodimer. The cofactor is Mg(2+).

Its subcellular location is the cytoplasm. It carries out the reaction tRNA(Lys) + L-lysine + ATP = L-lysyl-tRNA(Lys) + AMP + diphosphate. This Legionella pneumophila (strain Lens) protein is Lysine--tRNA ligase.